The chain runs to 199 residues: Ion-translocating oxidoreductase complex subunit A (199 aa).

A run of 6 helical transmembrane segments spans residues 8–28 (LFTI…QFLG), 49–69 (VVFV…FILV), 75–95 (FLRT…VEFI), 106–126 (SLGI…AVLL), 138–158 (VVFG…MAAI), and 178–198 (AFFI…VIPL).

The protein belongs to the NqrDE/RnfAE family. The Rnf complex is probably composed of eight subunits, including RnfA, RnfB, RnfC, RnfD, RnfE and RnfG.

The protein resides in the cell membrane. Functionally, part of a membrane-bound complex that couples electron transfer with translocation of ions across the membrane. Catalyzes Na(+) transport, most probably coupled to electron transfer from reduced ferredoxin to methanophenazine and heterodisulfide reductase. Involved in heterodisulfide reduction during methanogenesis from acetate. This chain is Ion-translocating oxidoreductase complex subunit A, found in Methanosarcina acetivorans (strain ATCC 35395 / DSM 2834 / JCM 12185 / C2A).